Consider the following 115-residue polypeptide: Probable non-functional T cell receptor beta variable 7-1 (115 aa).

The first 21 residues, 1 to 21 (MGTRLLCWAAICLLGADHTGA), serve as a signal peptide directing secretion. The Ig-like domain maps to 22–115 (GVSQSLRHKV…LAVYLCASSS (94 aa)).

In terms of assembly, most probably, the alpha-beta TR is not assembled due to incorrect folding of the beta chain. Alpha-beta TR is a heterodimer composed of an alpha and beta chain; disulfide-linked. The alpha-beta TR is associated with the transmembrane signaling CD3 coreceptor proteins to form the TR-CD3 (TcR or TCR). The assembly of alpha-beta TR heterodimers with CD3 occurs in the endoplasmic reticulum where a single alpha-beta TR heterodimer associates with one CD3D-CD3E heterodimer, one CD3G-CD3E heterodimer and one CD247 homodimer forming a stable octameric structure. CD3D-CD3E and CD3G-CD3E heterodimers preferentially associate with TR alpha and TR beta chains, respectively. The association of the CD247 homodimer is the last step of TcR assembly in the endoplasmic reticulum and is required for transport to the cell surface.

It localises to the cell membrane. Functionally, probable non-functional open reading frame (ORF) of V region of the variable domain of T cell receptor (TR) beta chain. Non-functional ORF generally cannot participate in the synthesis of a productive T cell receptor (TR) chain due to altered V-(D)-J or switch recombination and/or splicing site (at mRNA level) and/or conserved amino acid change (protein level). Alpha-beta T cell receptors are antigen specific receptors which are essential to the immune response and are present on the cell surface of T lymphocytes. Recognize peptide-major histocompatibility (MH) (pMH) complexes that are displayed by antigen presenting cells (APC), a prerequisite for efficient T cell adaptive immunity against pathogens. Binding of alpha-beta TR to pMH complex initiates TR-CD3 clustering on the cell surface and intracellular activation of LCK that phosphorylates the ITAM motifs of CD3G, CD3D, CD3E and CD247 enabling the recruitment of ZAP70. In turn ZAP70 phosphorylates LAT, which recruits numerous signaling molecules to form the LAT signalosome. The LAT signalosome propagates signal branching to three major signaling pathways, the calcium, the mitogen-activated protein kinase (MAPK) kinase and the nuclear factor NF-kappa-B (NF-kB) pathways, leading to the mobilization of transcription factors that are critical for gene expression and essential for T cell growth and differentiation. The T cell repertoire is generated in the thymus, by V-(D)-J rearrangement. This repertoire is then shaped by intrathymic selection events to generate a peripheral T cell pool of self-MH restricted, non-autoaggressive T cells. Post-thymic interaction of alpha-beta TR with the pMH complexes shapes TR structural and functional avidity. This chain is Probable non-functional T cell receptor beta variable 7-1, found in Homo sapiens (Human).